A 197-amino-acid chain; its full sequence is Nucleoid occlusion factor SlmA (197 aa).

The region spanning 6–66 is the HTH tetR-type domain; that stretch reads NDRRTQILQA…GLIEFIEESL (61 aa). A DNA-binding region (H-T-H motif) is located at residues 29-48; sequence TTAALAKQVGVSEAALYRHF.

Belongs to the nucleoid occlusion factor SlmA family. Homodimer. Interacts with FtsZ.

The protein localises to the cytoplasm. Its subcellular location is the nucleoid. Its function is as follows. Required for nucleoid occlusion (NO) phenomenon, which prevents Z-ring formation and cell division over the nucleoid. Acts as a DNA-associated cell division inhibitor that binds simultaneously chromosomal DNA and FtsZ, and disrupts the assembly of FtsZ polymers. SlmA-DNA-binding sequences (SBS) are dispersed on non-Ter regions of the chromosome, preventing FtsZ polymerization at these regions. This Marinomonas sp. (strain MWYL1) protein is Nucleoid occlusion factor SlmA.